The following is a 499-amino-acid chain: Glucose-6-phosphate isomerase (499 aa).

Residue glutamate 352 is the Proton donor of the active site. Active-site residues include histidine 383 and lysine 487.

The protein belongs to the GPI family.

Its subcellular location is the cytoplasm. The catalysed reaction is alpha-D-glucose 6-phosphate = beta-D-fructose 6-phosphate. The protein operates within carbohydrate biosynthesis; gluconeogenesis. It functions in the pathway carbohydrate degradation; glycolysis; D-glyceraldehyde 3-phosphate and glycerone phosphate from D-glucose: step 2/4. Functionally, catalyzes the reversible isomerization of glucose-6-phosphate to fructose-6-phosphate. The polypeptide is Glucose-6-phosphate isomerase (Legionella pneumophila (strain Lens)).